We begin with the raw amino-acid sequence, 577 residues long: Arginine--tRNA ligase (577 aa).

The short motif at 122–132 (PNVAKEMHVGH) is the 'HIGH' region element.

This sequence belongs to the class-I aminoacyl-tRNA synthetase family. Monomer.

It is found in the cytoplasm. The catalysed reaction is tRNA(Arg) + L-arginine + ATP = L-arginyl-tRNA(Arg) + AMP + diphosphate. This Salmonella agona (strain SL483) protein is Arginine--tRNA ligase.